The following is a 238-amino-acid chain: Adenylate dimethylallyltransferase (238 aa).

The protein belongs to the isopentenyl transferase family.

It carries out the reaction dimethylallyl diphosphate + AMP = N(6)-(dimethylallyl)adenosine 5'-phosphate + diphosphate. Functionally, transfers dimethylallyl groups to AMP as part of the biosynthesis of cytokinin phytohormones. This Ralstonia solanacearum (Pseudomonas solanacearum) protein is Adenylate dimethylallyltransferase (tzs).